Consider the following 330-residue polypeptide: Ketol-acid reductoisomerase (NADP(+)) (330 aa).

Positions Ala2–Thr181 constitute a KARI N-terminal Rossmann domain. Residues Tyr25 to Gln28, Arg48, Ser52, and Asp82 to Gln85 contribute to the NADP(+) site. The active site involves His107. Gly133 contributes to the NADP(+) binding site. In terms of domain architecture, KARI C-terminal knotted spans Thr182–Ile327. Positions 190, 194, 226, and 230 each coordinate Mg(2+). Substrate is bound at residue Ser251.

The protein belongs to the ketol-acid reductoisomerase family. Mg(2+) is required as a cofactor.

It catalyses the reaction (2R)-2,3-dihydroxy-3-methylbutanoate + NADP(+) = (2S)-2-acetolactate + NADPH + H(+). It carries out the reaction (2R,3R)-2,3-dihydroxy-3-methylpentanoate + NADP(+) = (S)-2-ethyl-2-hydroxy-3-oxobutanoate + NADPH + H(+). It functions in the pathway amino-acid biosynthesis; L-isoleucine biosynthesis; L-isoleucine from 2-oxobutanoate: step 2/4. The protein operates within amino-acid biosynthesis; L-valine biosynthesis; L-valine from pyruvate: step 2/4. In terms of biological role, involved in the biosynthesis of branched-chain amino acids (BCAA). Catalyzes an alkyl-migration followed by a ketol-acid reduction of (S)-2-acetolactate (S2AL) to yield (R)-2,3-dihydroxy-isovalerate. In the isomerase reaction, S2AL is rearranged via a Mg-dependent methyl migration to produce 3-hydroxy-3-methyl-2-ketobutyrate (HMKB). In the reductase reaction, this 2-ketoacid undergoes a metal-dependent reduction by NADPH to yield (R)-2,3-dihydroxy-isovalerate. This Macrococcus caseolyticus (strain JCSC5402) (Macrococcoides caseolyticum) protein is Ketol-acid reductoisomerase (NADP(+)).